A 251-amino-acid polypeptide reads, in one-letter code: Aliphatic sulfonates import ATP-binding protein SsuB (251 aa).

The region spanning 19 to 238 (GELRHVDKWY…PGEPGAHTER (220 aa)) is the ABC transporter domain. 51-58 (GRSGSGKS) serves as a coordination point for ATP.

This sequence belongs to the ABC transporter superfamily. Aliphatic sulfonates importer (TC 3.A.1.17.2) family. In terms of assembly, the complex is composed of two ATP-binding proteins (SsuB), two transmembrane proteins (SsuC) and a solute-binding protein (SsuA).

The protein localises to the cell membrane. The catalysed reaction is ATP + H2O + aliphatic sulfonate-[sulfonate-binding protein]Side 1 = ADP + phosphate + aliphatic sulfonateSide 2 + [sulfonate-binding protein]Side 1.. In terms of biological role, part of the ABC transporter complex SsuABC involved in aliphatic sulfonates import. Responsible for energy coupling to the transport system. This chain is Aliphatic sulfonates import ATP-binding protein SsuB, found in Mycobacterium avium (strain 104).